The primary structure comprises 396 residues: Putative nickel insertion protein (396 aa).

It belongs to the LarC family.

The protein is Putative nickel insertion protein of Methanosarcina acetivorans (strain ATCC 35395 / DSM 2834 / JCM 12185 / C2A).